The sequence spans 300 residues: Protein Bel-1 (300 aa).

Disordered stretches follow at residues 1 to 20 (MDSY…QDLQ), 26 to 50 (VGPE…RRPR), and 185 to 237 (KPST…GDTV). Residues 11–20 (ASTSGLQDLQ) show a composition bias toward polar residues. Residues 89-200 (SKSICKRLIL…PEGPKPRRRH (112 aa)) mediate DNA binding. The segment covering 201 to 210 (DPVLRCDMFE) has biased composition (basic and acidic residues). Positions 211-222 (KHHKPRPKRSRK) are enriched in basic residues. Residues 214–223 (KPRPKRSRKR) carry the Nuclear localization signal motif. Positions 224-300 (SIDHESCASS…PSGSGEHSVL (77 aa)) are transactivation domain.

In terms of assembly, homodimer or homomultimer. Forms complexes with the host nuclear factors NFIA, NFIB, NFIC or NFIX.

It localises to the host nucleus. Its function is as follows. Transcriptional transactivator that activates the viral internal promoter (IP), thereby enhancing its own expression. This transactivation is repressed by nuclear factor I. Also transactivates the long terminal repeat (LTR) promoter, thereby inducing structural gene expression, initiating the late phase of infection. It is therefore a key regulator of viral gene expression. It directly binds to and activates DNA target sites of viral promoters and those of distinct cellular genes. Required for viral replication. The sequence is that of Protein Bel-1 (bel1) from Pan troglodytes (Chimpanzee).